A 181-amino-acid polypeptide reads, in one-letter code: Probable nicotinate-nucleotide adenylyltransferase (181 aa).

It belongs to the NadD family.

The catalysed reaction is nicotinate beta-D-ribonucleotide + ATP + H(+) = deamido-NAD(+) + diphosphate. It participates in cofactor biosynthesis; NAD(+) biosynthesis; deamido-NAD(+) from nicotinate D-ribonucleotide: step 1/1. Functionally, catalyzes the reversible adenylation of nicotinate mononucleotide (NaMN) to nicotinic acid adenine dinucleotide (NaAD). In Campylobacter jejuni subsp. jejuni serotype O:23/36 (strain 81-176), this protein is Probable nicotinate-nucleotide adenylyltransferase.